The chain runs to 133 residues: Small ribosomal subunit protein uS11 (133 aa).

This sequence belongs to the universal ribosomal protein uS11 family. Part of the 30S ribosomal subunit. Interacts with proteins S7 and S18. Binds to IF-3.

In terms of biological role, located on the platform of the 30S subunit, it bridges several disparate RNA helices of the 16S rRNA. Forms part of the Shine-Dalgarno cleft in the 70S ribosome. This is Small ribosomal subunit protein uS11 from Ralstonia pickettii (strain 12J).